The following is a 73-amino-acid chain: NADH dehydrogenase [ubiquinone] 1 beta subcomplex subunit 3-B (73 aa).

A helical membrane pass occupies residues 31–48; sequence ALPGLGIGVAAFCVYLVG.

It belongs to the complex I NDUFB3 subunit family. In terms of assembly, complex I is composed of at least 49 different subunits.

It localises to the mitochondrion inner membrane. Accessory subunit of the mitochondrial membrane respiratory chain NADH dehydrogenase (Complex I), that is believed not to be involved in catalysis. Complex I functions in the transfer of electrons from NADH to the respiratory chain. The immediate electron acceptor for the enzyme is believed to be ubiquinone. This Arabidopsis thaliana (Mouse-ear cress) protein is NADH dehydrogenase [ubiquinone] 1 beta subcomplex subunit 3-B.